A 241-amino-acid polypeptide reads, in one-letter code: Pyridoxal phosphate phosphatase PHOSPHO2 (241 aa).

Asp8 (nucleophile) is an active-site residue. Mg(2+) contacts are provided by Asp8 and Asp10. Catalysis depends on Asp10, which acts as the Proton donor. Residues Asp19 and Asp99 each contribute to the substrate site. Asp179 contributes to the Mg(2+) binding site.

The protein belongs to the HAD-like hydrolase superfamily. PHOSPHO family. Mg(2+) is required as a cofactor.

The enzyme catalyses pyridoxal 5'-phosphate + H2O = pyridoxal + phosphate. In terms of biological role, phosphatase that has high activity toward pyridoxal 5'-phosphate (PLP). Also active at much lower level toward pyrophosphate, phosphoethanolamine (PEA), phosphocholine (PCho), phospho-l-tyrosine, fructose-6-phosphate, p-nitrophenyl phosphate, and h-glycerophosphate. The chain is Pyridoxal phosphate phosphatase PHOSPHO2 (Phospho2) from Mus musculus (Mouse).